The sequence spans 681 residues: Hydroxyproline O-galactosyltransferase GALT6 (681 aa).

The Cytoplasmic portion of the chain corresponds to 1 to 28; that stretch reads MRKPKLSKLERLEKFDIFVSLSKQRSVQ. A helical; Signal-anchor for type II membrane protein membrane pass occupies residues 29–49; the sequence is ILMAVGLLYMLLITFEIPFVF. At 50 to 681 the chain is on the lumenal side; sequence KTGLSSLSQD…TGKPQCCNMR (632 aa). Residues 57-80 form a disordered region; that stretch reads SQDPLTRPEKHNSQRELQERRAPT. The segment covering 62–78 has biased composition (basic and acidic residues); the sequence is TRPEKHNSQRELQERRA. The region spanning 187 to 401 is the Galectin domain; that stretch reads NIMELPCGLT…DIDVHSVFAG (215 aa). N-linked (GlcNAc...) asparagine glycosylation occurs at Asn629.

This sequence belongs to the glycosyltransferase 31 family. The cofactor is Mn(2+). In terms of tissue distribution, expressed in junveile leaves and stems, and at lower levels in cauline leaves and siliques.

Its subcellular location is the golgi apparatus membrane. It functions in the pathway protein modification; protein glycosylation. Its function is as follows. Possesses hydroxyproline O-galactosyltransferase activity. Transfers galactose from UDP-galactose to hydroxyproline residues in the arabinogalactan proteins (AGPs). Is specific for AGPs containing non-contiguous peptidyl hydroxyproline residues. Utilizes UDP-galactose solely as sugar donor. The addition of galactose onto the peptidyl hydroxyproline residues in AGP core proteins represents the first committed step in arabinogalactan polysaccharide addition. AGP glycans play essential roles in both vegetative and reproductive plant growth. The polypeptide is Hydroxyproline O-galactosyltransferase GALT6 (Arabidopsis thaliana (Mouse-ear cress)).